The primary structure comprises 585 residues: Pyruvate kinase (585 aa).

R32 provides a ligand contact to substrate. Residues N34, S36, D66, and T67 each contribute to the K(+) site. 34 to 37 lines the ATP pocket; that stretch reads NFSH. 2 residues coordinate ATP: R73 and K156. E221 contacts Mg(2+). The substrate site is built by G244, D245, and T277. Position 245 (D245) interacts with Mg(2+).

It belongs to the pyruvate kinase family. This sequence in the C-terminal section; belongs to the PEP-utilizing enzyme family. The cofactor is Mg(2+). It depends on K(+) as a cofactor.

The catalysed reaction is pyruvate + ATP = phosphoenolpyruvate + ADP + H(+). The protein operates within carbohydrate degradation; glycolysis; pyruvate from D-glyceraldehyde 3-phosphate: step 5/5. This chain is Pyruvate kinase (pyk), found in Staphylococcus epidermidis (strain ATCC 35984 / DSM 28319 / BCRC 17069 / CCUG 31568 / BM 3577 / RP62A).